A 241-amino-acid polypeptide reads, in one-letter code: Glutathione S-transferase theta-3 (241 aa).

Residues 2–82 (GLELYLDLMS…YLSRKYKAPD (81 aa)) form the GST N-terminal domain. Glutathione-binding positions include 53–54 (KV) and 66–67 (ES). One can recognise a GST C-terminal domain in the interval 88–222 (DLQTRARVDE…VVLKAKDMPP (135 aa)).

It belongs to the GST superfamily. Theta family. Homodimer. In terms of tissue distribution, expressed strongly in liver, and at lower levels in kidney and testis.

The protein localises to the cytoplasm. The enzyme catalyses RX + glutathione = an S-substituted glutathione + a halide anion + H(+). Functionally, conjugation of reduced glutathione to a wide number of exogenous and endogenous hydrophobic electrophiles. Shows high activity towards 4-nitrobenzyl chloride (4-NBC). Also has lower activity towards 1,2-epoxy-3-(p-nitrophenoxy)propane (EPNP), cumene hydroperoxide, 1-chloro-2,4-dinitrobenzene (CDNB), 7-chloro-4-nitrobenzo-2-oxa-1,3-diazole (NBD-Cl), and ethacrynic acid. This is Glutathione S-transferase theta-3 from Mus musculus (Mouse).